The following is a 199-amino-acid chain: Pyridoxine/pyridoxamine 5'-phosphate oxidase (199 aa).

FMN-binding positions include 44 to 49 (RTVLLK), 59 to 60 (YT), lysine 66, and glutamine 91. Lysine 49 is a binding site for substrate. Positions 109, 113, and 117 each coordinate substrate. Residues 126–127 (QS) and tryptophan 171 contribute to the FMN site. Residue 177-179 (RLH) coordinates substrate. An FMN-binding site is contributed by arginine 181.

It belongs to the pyridoxamine 5'-phosphate oxidase family. In terms of assembly, homodimer. FMN is required as a cofactor.

The catalysed reaction is pyridoxamine 5'-phosphate + O2 + H2O = pyridoxal 5'-phosphate + H2O2 + NH4(+). It catalyses the reaction pyridoxine 5'-phosphate + O2 = pyridoxal 5'-phosphate + H2O2. Its pathway is cofactor metabolism; pyridoxal 5'-phosphate salvage; pyridoxal 5'-phosphate from pyridoxamine 5'-phosphate: step 1/1. It functions in the pathway cofactor metabolism; pyridoxal 5'-phosphate salvage; pyridoxal 5'-phosphate from pyridoxine 5'-phosphate: step 1/1. Functionally, catalyzes the oxidation of either pyridoxine 5'-phosphate (PNP) or pyridoxamine 5'-phosphate (PMP) into pyridoxal 5'-phosphate (PLP). The sequence is that of Pyridoxine/pyridoxamine 5'-phosphate oxidase from Xanthomonas campestris pv. campestris (strain 8004).